A 1667-amino-acid chain; its full sequence is Myomesin-1 (1667 aa).

Residues S124 and S142 each carry the phosphoserine modification. Over residues 192–210 (SKQSTASKQSATSKRTTST) the composition is skewed to low complexity. The interval 192-217 (SKQSTASKQSATSKRTTSTLQREETF) is disordered. 2 consecutive Ig-like C2-type domains span residues 258–349 (PEFI…ASVV) and 376–478 (PYGY…AYVF). Fibronectin type-III domains follow at residues 492 to 587 (APLD…ALDP), 620 to 714 (PPTD…VVGD), and 721 to 814 (APGK…VKAA). The disordered stretch occupies residues 818–915 (GVSPDVWPQL…PKKKKDPVAV (98 aa)). Phosphoserine is present on residues S863 and S867. Over residues 885–894 (EPLSSPPQEA) the composition is skewed to low complexity. 2 consecutive Fibronectin type-III domains span residues 918–1016 (APYD…CEEW) and 1023–1122 (PPHS…TRPG). S1036 is subject to Phosphoserine. 3 Ig-like C2-type domains span residues 1114-1212 (PVVA…EEMK), 1340-1426 (PHFA…LKLV), and 1555-1644 (RVLG…FTVS).

Homodimer. Interacts with TTN/titin and PNKD. Ubiquitously expressed in all striated muscles. Expressed in all fiber types.

It is found in the cytoplasm. Its subcellular location is the myofibril. The protein resides in the sarcomere. The protein localises to the m line. May link the intermediate filament cytoskeleton to the M-disk of the myofibrils in striated muscle. May also contact myosin filaments. Also binds beta-integrins. The polypeptide is Myomesin-1 (Myom1) (Mus musculus (Mouse)).